We begin with the raw amino-acid sequence, 209 residues long: MICOS complex subunit mic19 (209 aa).

2 coiled-coil regions span residues 48 to 86 (LELEIQNRVAKELERLRAREQQTLAEIEKRLSEAKDTGS) and 127 to 156 (EVAAVNKELNRESVNSEIEELRVKLEGRKK).

Belongs to the MICOS complex subunit Mic19 family. As to quaternary structure, component of the mitochondrial contact site and cristae organizing system (MICOS) complex.

It localises to the mitochondrion inner membrane. Component of the MICOS complex, a large protein complex of the mitochondrial inner membrane that plays crucial roles in the maintenance of crista junctions, inner membrane architecture, and formation of contact sites to the outer membrane. Involved in osmoadaptation. The chain is MICOS complex subunit mic19 from Emericella nidulans (strain FGSC A4 / ATCC 38163 / CBS 112.46 / NRRL 194 / M139) (Aspergillus nidulans).